An 805-amino-acid polypeptide reads, in one-letter code: Translation initiation factor IF-2 (805 aa).

2 disordered regions span residues 68 to 89 and 141 to 215; these read VVTE…EKKE and KEKE…KEKK. The span at 79-89 shows a compositional bias: basic and acidic residues; the sequence is VEEKKEEEKKE. In terms of domain architecture, tr-type G spans 306-474; sequence PRPPIVVVMG…MILLLADILE (169 aa). The interval 315–322 is G1; sequence GHVDHGKT. Residue 315 to 322 coordinates GTP; the sequence is GHVDHGKT. The G2 stretch occupies residues 340–344; sequence GITQH. Residues 362–365 are G3; it reads DTPG. GTP contacts are provided by residues 362–366 and 416–419; these read DTPGH and NKID. The segment at 416–419 is G4; the sequence is NKID. The interval 452–454 is G5; sequence SAK.

The protein belongs to the TRAFAC class translation factor GTPase superfamily. Classic translation factor GTPase family. IF-2 subfamily.

It localises to the cytoplasm. In terms of biological role, one of the essential components for the initiation of protein synthesis. Protects formylmethionyl-tRNA from spontaneous hydrolysis and promotes its binding to the 30S ribosomal subunits. Also involved in the hydrolysis of GTP during the formation of the 70S ribosomal complex. The sequence is that of Translation initiation factor IF-2 (infB) from Aquifex aeolicus (strain VF5).